The primary structure comprises 311 residues: Cytochrome c biogenesis protein CcsA (311 aa).

Helical transmembrane passes span 11–31 (VLLLGLMAFGALLLALPLAFW), 44–64 (VVQLLVVAANLLLTAQLLWRW), 68–88 (GHFPISNLYESLCFLAWGCTF), 101–121 (LVPAATTPMALVCVAFASFAL), 146–166 (VIMMSYAALLVGSLLSAAVLF), 217–237 (TITVGFLLLTVGIISGAVWAN), 251–268 (TWALICWLVYAAYLHTRL), and 280–300 (VAVSGLFVISVCYIGVNLLGI).

The protein belongs to the CcmF/CycK/Ccl1/NrfE/CcsA family. As to quaternary structure, may interact with ccs1.

Its subcellular location is the cellular thylakoid membrane. Its function is as follows. Required during biogenesis of c-type cytochromes (cytochrome c6 and cytochrome f) at the step of heme attachment. The sequence is that of Cytochrome c biogenesis protein CcsA from Synechococcus sp. (strain RCC307).